The sequence spans 174 residues: Small ribosomal subunit protein uS5 (174 aa).

The S5 DRBM domain maps to 19–82; that stretch reads LREKMVAINR…DEARRKMVKV (64 aa).

The protein belongs to the universal ribosomal protein uS5 family. As to quaternary structure, part of the 30S ribosomal subunit. Contacts proteins S4 and S8.

Functionally, with S4 and S12 plays an important role in translational accuracy. In terms of biological role, located at the back of the 30S subunit body where it stabilizes the conformation of the head with respect to the body. This Azoarcus sp. (strain BH72) protein is Small ribosomal subunit protein uS5.